The following is a 128-amino-acid chain: RutC family protein BU371 (128 aa).

Belongs to the RutC family.

The sequence is that of RutC family protein BU371 from Buchnera aphidicola subsp. Acyrthosiphon pisum (strain APS) (Acyrthosiphon pisum symbiotic bacterium).